The following is a 229-amino-acid chain: Enolase-phosphatase E1 (229 aa).

The protein belongs to the HAD-like hydrolase superfamily. MasA/MtnC family. Monomer. Mg(2+) is required as a cofactor.

It catalyses the reaction 5-methylsulfanyl-2,3-dioxopentyl phosphate + H2O = 1,2-dihydroxy-5-(methylsulfanyl)pent-1-en-3-one + phosphate. It functions in the pathway amino-acid biosynthesis; L-methionine biosynthesis via salvage pathway; L-methionine from S-methyl-5-thio-alpha-D-ribose 1-phosphate: step 3/6. Its pathway is amino-acid biosynthesis; L-methionine biosynthesis via salvage pathway; L-methionine from S-methyl-5-thio-alpha-D-ribose 1-phosphate: step 4/6. Functionally, bifunctional enzyme that catalyzes the enolization of 2,3-diketo-5-methylthiopentyl-1-phosphate (DK-MTP-1-P) into the intermediate 2-hydroxy-3-keto-5-methylthiopentenyl-1-phosphate (HK-MTPenyl-1-P), which is then dephosphorylated to form the acireductone 1,2-dihydroxy-3-keto-5-methylthiopentene (DHK-MTPene). The protein is Enolase-phosphatase E1 of Pectobacterium carotovorum subsp. carotovorum (strain PC1).